The chain runs to 278 residues: MLINDVNKVKVGNIVFGGKKRFVLIAGPCVMESQELMDEVAGGIKEICDRLGIEYIFKASFDKANRSSIYSYRGPGLEEGMKMLTKIKEKFNVPVITDVHEAWQCKEVAKVADILQIPAFLCRQTDLLIAAAETGKAVNIKKGQFLAPWDMKNIVVKMEESRNKNIMLCERGSTFGYNNMVVDMRSLLEMRKFNYPVIFDVTHSVQKPGGLGTATSGDREYVYPLLRAGLAIGVDAIFAEVHPNPAEAKSDGPNMLYLKDLEEILKIAIEIDKIVKGV.

The protein belongs to the KdsA family.

The protein localises to the cytoplasm. The catalysed reaction is D-arabinose 5-phosphate + phosphoenolpyruvate + H2O = 3-deoxy-alpha-D-manno-2-octulosonate-8-phosphate + phosphate. It functions in the pathway carbohydrate biosynthesis; 3-deoxy-D-manno-octulosonate biosynthesis; 3-deoxy-D-manno-octulosonate from D-ribulose 5-phosphate: step 2/3. Its pathway is bacterial outer membrane biogenesis; lipopolysaccharide biosynthesis. The sequence is that of 2-dehydro-3-deoxyphosphooctonate aldolase from Fusobacterium nucleatum subsp. nucleatum (strain ATCC 25586 / DSM 15643 / BCRC 10681 / CIP 101130 / JCM 8532 / KCTC 2640 / LMG 13131 / VPI 4355).